Consider the following 267-residue polypeptide: MADS-box transcription factor 15 (267 aa).

The 61-residue stretch at Met1–Ser61 folds into the MADS-box domain. The K-box domain maps to Glu88–Asn178. The tract at residues Val179–Asp215 is disordered. Positions Gln182 to Asp215 are enriched in low complexity.

In terms of assembly, may interact with the K-box of MADS1 and MADS6.

The protein resides in the nucleus. In terms of biological role, probable transcription factor. The protein is MADS-box transcription factor 15 (MADS15) of Oryza sativa subsp. japonica (Rice).